The sequence spans 204 residues: 3-dehydroquinate dehydratase (204 aa).

3-dehydroquinate-binding positions include Ser9, 30-32, and Arg57; that span reads ELR. The active-site Proton donor/acceptor is the His108. The Schiff-base intermediate with substrate role is filled by Lys133. Arg167, Thr186, and Gln190 together coordinate 3-dehydroquinate.

It belongs to the type-I 3-dehydroquinase family. Homodimer.

It carries out the reaction 3-dehydroquinate = 3-dehydroshikimate + H2O. It participates in metabolic intermediate biosynthesis; chorismate biosynthesis; chorismate from D-erythrose 4-phosphate and phosphoenolpyruvate: step 3/7. Functionally, involved in the third step of the chorismate pathway, which leads to the biosynthesis of aromatic amino acids. Catalyzes the cis-dehydration of 3-dehydroquinate (DHQ) and introduces the first double bond of the aromatic ring to yield 3-dehydroshikimate. The polypeptide is 3-dehydroquinate dehydratase (Metallosphaera sedula (strain ATCC 51363 / DSM 5348 / JCM 9185 / NBRC 15509 / TH2)).